The sequence spans 740 residues: Elongation factor 2 (740 aa).

The region spanning 23-264 is the tr-type G domain; sequence AQIRNAGTLA…MIIEHIPPPN (242 aa). Residues 32 to 39, 98 to 102, and 152 to 155 each bind GTP; these read AHVDHGKT, DTPGH, and NKID. Position 605 is a diphthamide (histidine 605).

This sequence belongs to the TRAFAC class translation factor GTPase superfamily. Classic translation factor GTPase family. EF-G/EF-2 subfamily.

The protein resides in the cytoplasm. Catalyzes the GTP-dependent ribosomal translocation step during translation elongation. During this step, the ribosome changes from the pre-translocational (PRE) to the post-translocational (POST) state as the newly formed A-site-bound peptidyl-tRNA and P-site-bound deacylated tRNA move to the P and E sites, respectively. Catalyzes the coordinated movement of the two tRNA molecules, the mRNA and conformational changes in the ribosome. This chain is Elongation factor 2, found in Pyrobaculum aerophilum (strain ATCC 51768 / DSM 7523 / JCM 9630 / CIP 104966 / NBRC 100827 / IM2).